The chain runs to 390 residues: MLQFDLLTTDPASHARRGRLTLRHGQVQTPIFMPVGTHGSVKGVLPRSLHEMGAQIILGNTFHLWLRPGLAVLQGFGGLHGFEKWNKPILTDSGGFQVWSLGALRTITEEGVHFASPVNGDKLFLSPEVSMQIQTTLDSDIVMQLDECTPYETRGQRTTERAACQSMQMSLRWAKRSQDEFQRLNNPNALFGIVQGGMYENLRAESLAALAAMDLPGYAIGGVSVGEPKDEMLRIMAHTPHRLPAHKPRYLMGVGTPEDLVEGVAQGVDMFDCVMPTRNARNGTLFTRFGDLKIRNARHKTDPQPLDGSCTCYTCAGPSGVAWDQGGRDGFSRAYLHHLERCGEMLGPMLSTVHNLHYYLNLMREIRQALDAGEFTQLRARLKADRARGV.

The active-site Proton acceptor is the aspartate 92. Residues aspartate 92 to phenylalanine 96, aspartate 146, glutamine 195, and glycine 222 each bind substrate. Positions glycine 253–aspartate 259 are RNA binding. The Nucleophile role is filled by aspartate 272. The segment at threonine 277–arginine 281 is RNA binding; important for wobble base 34 recognition. Positions 310, 312, 315, and 354 each coordinate Zn(2+).

This sequence belongs to the queuine tRNA-ribosyltransferase family. In terms of assembly, homodimer. Within each dimer, one monomer is responsible for RNA recognition and catalysis, while the other monomer binds to the replacement base PreQ1. The cofactor is Zn(2+).

The catalysed reaction is 7-aminomethyl-7-carbaguanine + guanosine(34) in tRNA = 7-aminomethyl-7-carbaguanosine(34) in tRNA + guanine. It participates in tRNA modification; tRNA-queuosine biosynthesis. Functionally, catalyzes the base-exchange of a guanine (G) residue with the queuine precursor 7-aminomethyl-7-deazaguanine (PreQ1) at position 34 (anticodon wobble position) in tRNAs with GU(N) anticodons (tRNA-Asp, -Asn, -His and -Tyr). Catalysis occurs through a double-displacement mechanism. The nucleophile active site attacks the C1' of nucleotide 34 to detach the guanine base from the RNA, forming a covalent enzyme-RNA intermediate. The proton acceptor active site deprotonates the incoming PreQ1, allowing a nucleophilic attack on the C1' of the ribose to form the product. After dissociation, two additional enzymatic reactions on the tRNA convert PreQ1 to queuine (Q), resulting in the hypermodified nucleoside queuosine (7-(((4,5-cis-dihydroxy-2-cyclopenten-1-yl)amino)methyl)-7-deazaguanosine). This chain is Queuine tRNA-ribosyltransferase, found in Verminephrobacter eiseniae (strain EF01-2).